We begin with the raw amino-acid sequence, 208 residues long: 3,4-dihydroxy-2-butanone 4-phosphate synthase (208 aa).

At threonine 3 the chain carries Phosphothreonine. Glutamate 27 contributes to the Mg(2+) binding site. D-ribulose 5-phosphate is bound at residue aspartate 31. Cysteine 56 carries the S-glutathionyl cysteine; by GRX2 modification. D-ribulose 5-phosphate-binding positions include threonine 88 and 145 to 149; that span reads RRGHT. Histidine 148 is a Mg(2+) binding site.

The protein belongs to the DHBP synthase family. Homodimer. Mg(2+) serves as cofactor. The cofactor is Mn(2+). S-glutathionylation of Cys-56 is reversible and dependent on the cytoplasmic isoform of glutaredoxin-2.

Its subcellular location is the cytoplasm. It localises to the nucleus. The protein localises to the mitochondrion intermembrane space. It catalyses the reaction D-ribulose 5-phosphate = (2S)-2-hydroxy-3-oxobutyl phosphate + formate + H(+). The protein operates within cofactor biosynthesis; riboflavin biosynthesis; 2-hydroxy-3-oxobutyl phosphate from D-ribulose 5-phosphate: step 1/1. In terms of biological role, catalyzes the conversion of D-ribulose 5-phosphate to formate and 3,4-dihydroxy-2-butanone 4-phosphate. Also has an unrelated function in expression of mitochondrial respiration. The polypeptide is 3,4-dihydroxy-2-butanone 4-phosphate synthase (RIB3) (Saccharomyces cerevisiae (strain ATCC 204508 / S288c) (Baker's yeast)).